The primary structure comprises 223 residues: RNA polymerase sigma-H factor (223 aa).

Positions 67–80 (DIVQEGMIGLYKSI) match the Polymerase core binding motif. The H-T-H motif DNA-binding region spans 187–206 (YQEISEELNRHVKSIDNALQ).

The protein belongs to the sigma-70 factor family.

Functionally, sigma factors are initiation factors that promote the attachment of RNA polymerase to specific initiation sites and are then released. This sigma factor is involved in the transition to post-exponential phase in the beginning of sporulation. The protein is RNA polymerase sigma-H factor (sigH) of Bacillus licheniformis.